Reading from the N-terminus, the 303-residue chain is Eukaryotic translation initiation factor 3 subunit F (303 aa).

Polar residues predominate over residues 1 to 10 (MSLDTSSSAI). Residues 1-25 (MSLDTSSSAIHLQLPPTSSSLRPPS) are disordered. Residues 12–25 (LQLPPTSSSLRPPS) show a composition bias toward low complexity. One can recognise an MPN domain in the interval 27–165 (ITVHPSVIAQ…VKGWVSQPLG (139 aa)).

Belongs to the eIF-3 subunit F family. As to quaternary structure, component of the eukaryotic translation initiation factor 3 (eIF-3) complex.

The protein resides in the cytoplasm. Component of the eukaryotic translation initiation factor 3 (eIF-3) complex, which is involved in protein synthesis of a specialized repertoire of mRNAs and, together with other initiation factors, stimulates binding of mRNA and methionyl-tRNAi to the 40S ribosome. The eIF-3 complex specifically targets and initiates translation of a subset of mRNAs involved in cell proliferation. In Cryptococcus neoformans var. neoformans serotype D (strain B-3501A) (Filobasidiella neoformans), this protein is Eukaryotic translation initiation factor 3 subunit F.